The chain runs to 512 residues: Glutamyl-tRNA(Gln) amidotransferase subunit A (512 aa).

Active-site charge relay system residues include Lys-82 and Ser-157. The active-site Acyl-ester intermediate is the Ser-181.

Belongs to the amidase family. GatA subfamily. As to quaternary structure, heterotrimer of A, B and C subunits.

The catalysed reaction is L-glutamyl-tRNA(Gln) + L-glutamine + ATP + H2O = L-glutaminyl-tRNA(Gln) + L-glutamate + ADP + phosphate + H(+). Allows the formation of correctly charged Gln-tRNA(Gln) through the transamidation of misacylated Glu-tRNA(Gln) in organisms which lack glutaminyl-tRNA synthetase. The reaction takes place in the presence of glutamine and ATP through an activated gamma-phospho-Glu-tRNA(Gln). The sequence is that of Glutamyl-tRNA(Gln) amidotransferase subunit A from Bordetella bronchiseptica (strain ATCC BAA-588 / NCTC 13252 / RB50) (Alcaligenes bronchisepticus).